We begin with the raw amino-acid sequence, 245 residues long: Adenosine 5'-phosphosulfate reductase (245 aa).

[4Fe-4S] cluster-binding residues include Cys-124, Cys-125, Cys-205, and Cys-208. Cys-231 (nucleophile; cysteine thiosulfonate intermediate) is an active-site residue.

The protein belongs to the PAPS reductase family. CysH subfamily. [4Fe-4S] cluster is required as a cofactor.

It is found in the cytoplasm. It carries out the reaction [thioredoxin]-disulfide + sulfite + AMP + 2 H(+) = adenosine 5'-phosphosulfate + [thioredoxin]-dithiol. It functions in the pathway sulfur metabolism; hydrogen sulfide biosynthesis; sulfite from sulfate. In terms of biological role, catalyzes the formation of sulfite from adenosine 5'-phosphosulfate (APS) using thioredoxin as an electron donor. In Chelativorans sp. (strain BNC1), this protein is Adenosine 5'-phosphosulfate reductase.